We begin with the raw amino-acid sequence, 250 residues long: ATP synthase subunit a (250 aa).

The next 6 helical transmembrane spans lie at 26 to 46, 84 to 104, 114 to 134, 143 to 163, 193 to 213, and 216 to 236; these read FTNASLFMVATVGAAAGFLYL, FFPMVFSLFMFILTANLLGMV, IIVTFALAVFVIGTVILYGFY, LFVPHGVPGALLPLVVAIEII, FVASLSAFGALGIGGAILPLI, and VALTGLEFLVAFLQAYVFAVL.

This sequence belongs to the ATPase A chain family. As to quaternary structure, F-type ATPases have 2 components, CF(1) - the catalytic core - and CF(0) - the membrane proton channel. CF(1) has five subunits: alpha(3), beta(3), gamma(1), delta(1), epsilon(1). CF(0) has three main subunits: a(1), b(2) and c(9-12). The alpha and beta chains form an alternating ring which encloses part of the gamma chain. CF(1) is attached to CF(0) by a central stalk formed by the gamma and epsilon chains, while a peripheral stalk is formed by the delta and b chains.

It localises to the cell inner membrane. Functionally, key component of the proton channel; it plays a direct role in the translocation of protons across the membrane. The chain is ATP synthase subunit a from Sinorhizobium medicae (strain WSM419) (Ensifer medicae).